A 478-amino-acid polypeptide reads, in one-letter code: MLO-like protein 13 (478 aa).

Residues 1 to 10 (MAEARSGSLE) are Extracellular-facing. The helical transmembrane segment at 11 to 31 (YTPTWVVAFICFIIVLLSLLA) threads the bilayer. Residues 32 to 60 (ERGLHHLGKCLKRRQQDALFEALQKLKEE) are Cytoplasmic-facing. Residues 61–81 (LMLLGFISLMLTVSQAAIRHI) form a helical membrane-spanning segment. At 82 to 145 (CVPPALVNNM…VSVEALHQLH (64 aa)) the chain is on the extracellular side. The helical transmembrane segment at 146–166 (IFIFVLAVFHVIFCASTMVLG) threads the bilayer. At 167-276 (GARIQQWKHW…LRTLEIDFKK (110 aa)) the chain is on the cytoplasmic side. A run of 2 helical transmembrane segments spans residues 277–297 (VVSI…LNVG) and 298–318 (GWNT…MVGA). The Cytoplasmic segment spans residues 319-360 (KLEYIISSLALDVSEKRSRAEEAVITPSDELFWFHRPGIVLQ). The chain crosses the membrane as a helical span at residues 361 to 381 (LIHFILFQNSFEIAFFFWILF). The Extracellular portion of the chain corresponds to 382 to 400 (TYGIHSCIMEKLGYLIPRL). Residues 401-421 (VMGVLVQVLCSYSTLPLYALV) traverse the membrane as a helical segment. Residues 422 to 478 (TQMGSKFKKGIFDNVVQSTLEGWLEDTRNRGESTSEAHRIEMQPTTPESYNVQSENP) are Cytoplasmic-facing. Residues 435–456 (NVVQSTLEGWLEDTRNRGESTS) form a calmodulin-binding region. Positions 449-462 (RNRGESTSEAHRIE) are enriched in basic and acidic residues. A disordered region spans residues 449 to 478 (RNRGESTSEAHRIEMQPTTPESYNVQSENP). Polar residues predominate over residues 464-478 (QPTTPESYNVQSENP).

Belongs to the MLO family.

The protein localises to the membrane. Functionally, may be involved in modulation of pathogen defense and leaf cell death. Activity seems to be regulated by Ca(2+)-dependent calmodulin binding and seems not to require heterotrimeric G proteins. The chain is MLO-like protein 13 (MLO13) from Arabidopsis thaliana (Mouse-ear cress).